The sequence spans 156 residues: dCTP deaminase (156 aa).

DCTP contacts are provided by residues 79–84 (RSSLAR), Asp95, Gln124, and Tyr138.

It belongs to the dCTP deaminase family. As to quaternary structure, homotrimer.

It carries out the reaction dCTP + H2O + H(+) = dUTP + NH4(+). Its pathway is pyrimidine metabolism; dUMP biosynthesis; dUMP from dCTP (dUTP route): step 1/2. In terms of biological role, catalyzes the deamination of dCTP to dUTP. This is dCTP deaminase from Pyrococcus horikoshii (strain ATCC 700860 / DSM 12428 / JCM 9974 / NBRC 100139 / OT-3).